The sequence spans 346 residues: Methylthioribose-1-phosphate isomerase (346 aa).

Substrate-binding positions include 46–48 (RGA), Arg-89, and Gln-196. Asp-237 serves as the catalytic Proton donor. 247-248 (NK) is a substrate binding site.

The protein belongs to the eIF-2B alpha/beta/delta subunits family. MtnA subfamily.

The catalysed reaction is 5-(methylsulfanyl)-alpha-D-ribose 1-phosphate = 5-(methylsulfanyl)-D-ribulose 1-phosphate. Its pathway is amino-acid biosynthesis; L-methionine biosynthesis via salvage pathway; L-methionine from S-methyl-5-thio-alpha-D-ribose 1-phosphate: step 1/6. In terms of biological role, catalyzes the interconversion of methylthioribose-1-phosphate (MTR-1-P) into methylthioribulose-1-phosphate (MTRu-1-P). This Geotalea daltonii (strain DSM 22248 / JCM 15807 / FRC-32) (Geobacter daltonii) protein is Methylthioribose-1-phosphate isomerase.